The following is a 286-amino-acid chain: Pyridoxal kinase PdxY (286 aa).

Substrate-binding positions include Ser-9 and Met-44–Gln-45. Residues Asp-111, Glu-147, and Lys-180 each contribute to the ATP site. Asp-221 provides a ligand contact to substrate.

This sequence belongs to the pyridoxine kinase family. PdxY subfamily. In terms of assembly, homodimer. Requires Mg(2+) as cofactor.

It catalyses the reaction pyridoxal + ATP = pyridoxal 5'-phosphate + ADP + H(+). The protein operates within cofactor metabolism; pyridoxal 5'-phosphate salvage; pyridoxal 5'-phosphate from pyridoxal: step 1/1. Functionally, pyridoxal kinase involved in the salvage pathway of pyridoxal 5'-phosphate (PLP). Catalyzes the phosphorylation of pyridoxal to PLP. The polypeptide is Pyridoxal kinase PdxY (Burkholderia lata (strain ATCC 17760 / DSM 23089 / LMG 22485 / NCIMB 9086 / R18194 / 383)).